Reading from the N-terminus, the 184-residue chain is Tyrosine-protein kinase receptor Tie-1 (184 aa).

The Protein kinase domain occupies 1 to 164 (QLLQFAADVA…RMQEARKAYV (164 aa)). The Proton acceptor role is filled by Asp-25. Position 53 is a phosphotyrosine; by autocatalysis (Tyr-53).

The protein belongs to the protein kinase superfamily. Tyr protein kinase family. Tie subfamily. Interacts with svep1. As to expression, expressed in most populations of endothelial cells in 24 hours embryos, including the endocardium.

It is found in the cell membrane. The catalysed reaction is L-tyrosyl-[protein] + ATP = O-phospho-L-tyrosyl-[protein] + ADP + H(+). Functionally, transmembrane tyrosine-protein kinase. Required for the formation of facial lymphatic structures and brain lymphatic endothelial cells. Also required for embryonic ventral and dorsal migration of parachordal lymphoblasts along the arterial intersegmental vessel. Plays a role in the embryonic formation of the dorsal longitudinal anastomotic vessel. This Danio rerio (Zebrafish) protein is Tyrosine-protein kinase receptor Tie-1 (tie1).